Here is a 284-residue protein sequence, read N- to C-terminus: NAD kinase (284 aa).

Residue aspartate 60 is the Proton acceptor of the active site. NAD(+) is bound by residues 60–61 (DG), 134–135 (ND), arginine 145, lysine 162, aspartate 164, 175–180 (TAYSFS), and glutamine 234.

Belongs to the NAD kinase family. The cofactor is a divalent metal cation.

It is found in the cytoplasm. The catalysed reaction is NAD(+) + ATP = ADP + NADP(+) + H(+). Involved in the regulation of the intracellular balance of NAD and NADP, and is a key enzyme in the biosynthesis of NADP. Catalyzes specifically the phosphorylation on 2'-hydroxyl of the adenosine moiety of NAD to yield NADP. The chain is NAD kinase from Clostridium beijerinckii (strain ATCC 51743 / NCIMB 8052) (Clostridium acetobutylicum).